A 378-amino-acid polypeptide reads, in one-letter code: Glutamate 5-kinase (378 aa).

K14 is an ATP binding site. Positions 54, 141, and 153 each coordinate substrate. Position 173–174 (S173–D174) interacts with ATP. One can recognise a PUA domain in the interval A279 to D356.

It belongs to the glutamate 5-kinase family.

The protein resides in the cytoplasm. The enzyme catalyses L-glutamate + ATP = L-glutamyl 5-phosphate + ADP. Its pathway is amino-acid biosynthesis; L-proline biosynthesis; L-glutamate 5-semialdehyde from L-glutamate: step 1/2. Functionally, catalyzes the transfer of a phosphate group to glutamate to form L-glutamate 5-phosphate. The chain is Glutamate 5-kinase from Brucella canis (strain ATCC 23365 / NCTC 10854 / RM-666).